The primary structure comprises 264 residues: Thymidylate synthase (264 aa).

Arg-21 contacts dUMP. Position 51 (His-51) interacts with (6R)-5,10-methylene-5,6,7,8-tetrahydrofolate. Residue 126–127 (RR) participates in dUMP binding. Cys-146 acts as the Nucleophile in catalysis. Residues 166 to 169 (RSAD), Asn-177, and 207 to 209 (HLY) each bind dUMP. Position 169 (Asp-169) interacts with (6R)-5,10-methylene-5,6,7,8-tetrahydrofolate. Position 263 (Ala-263) interacts with (6R)-5,10-methylene-5,6,7,8-tetrahydrofolate.

Belongs to the thymidylate synthase family. Bacterial-type ThyA subfamily. As to quaternary structure, homodimer.

The protein resides in the cytoplasm. The enzyme catalyses dUMP + (6R)-5,10-methylene-5,6,7,8-tetrahydrofolate = 7,8-dihydrofolate + dTMP. It functions in the pathway pyrimidine metabolism; dTTP biosynthesis. Catalyzes the reductive methylation of 2'-deoxyuridine-5'-monophosphate (dUMP) to 2'-deoxythymidine-5'-monophosphate (dTMP) while utilizing 5,10-methylenetetrahydrofolate (mTHF) as the methyl donor and reductant in the reaction, yielding dihydrofolate (DHF) as a by-product. This enzymatic reaction provides an intracellular de novo source of dTMP, an essential precursor for DNA biosynthesis. In Cupriavidus necator (strain ATCC 17699 / DSM 428 / KCTC 22496 / NCIMB 10442 / H16 / Stanier 337) (Ralstonia eutropha), this protein is Thymidylate synthase.